The chain runs to 104 residues: Large ribosomal subunit protein uL24 (104 aa).

This sequence belongs to the universal ribosomal protein uL24 family. Part of the 50S ribosomal subunit.

Its function is as follows. One of two assembly initiator proteins, it binds directly to the 5'-end of the 23S rRNA, where it nucleates assembly of the 50S subunit. In terms of biological role, one of the proteins that surrounds the polypeptide exit tunnel on the outside of the subunit. This Colwellia psychrerythraea (strain 34H / ATCC BAA-681) (Vibrio psychroerythus) protein is Large ribosomal subunit protein uL24.